The chain runs to 334 residues: Nucleoid-associated protein Pfl01_0983 (334 aa).

Belongs to the YejK family.

It is found in the cytoplasm. It localises to the nucleoid. The sequence is that of Nucleoid-associated protein Pfl01_0983 from Pseudomonas fluorescens (strain Pf0-1).